A 1032-amino-acid polypeptide reads, in one-letter code: Putative oxidoreductase YgfK (1032 aa).

Residues 928-958 (RFQTLHLDAYCNECGNCAQFCPWNGKPYKDK) enclose the 4Fe-4S ferredoxin-type domain. The [4Fe-4S] cluster site is built by Cys938, Cys941, Cys944, and Cys948.

Requires [4Fe-4S] cluster as cofactor.

Its function is as follows. Could be an iron-sulfur flavoprotein with NADPH:O(2) oxidoreductase activity. The polypeptide is Putative oxidoreductase YgfK (ygfK) (Escherichia coli O157:H7).